The chain runs to 183 residues: Ribosome rescue factor SmrB (183 aa).

In terms of domain architecture, Smr spans 98–173; it reads LDLHGLTQLQ…GDAALLVLIE (76 aa).

This sequence belongs to the SmrB family. Associates with collided ribosomes, but not with correctly translating polysomes.

Functionally, acts as a ribosome collision sensor. Detects stalled/collided disomes (pairs of ribosomes where the leading ribosome is stalled and a second ribosome has collided with it) and endonucleolytically cleaves mRNA at the 5' boundary of the stalled ribosome. Stalled/collided disomes form a new interface (primarily via the 30S subunits) that binds SmrB. Cleaved mRNA becomes available for tmRNA ligation, leading to ribosomal subunit dissociation and rescue of stalled ribosomes. The chain is Ribosome rescue factor SmrB from Escherichia fergusonii (strain ATCC 35469 / DSM 13698 / CCUG 18766 / IAM 14443 / JCM 21226 / LMG 7866 / NBRC 102419 / NCTC 12128 / CDC 0568-73).